Here is a 503-residue protein sequence, read N- to C-terminus: Maturase K (503 aa).

This sequence belongs to the intron maturase 2 family. MatK subfamily.

The protein localises to the plastid. Its subcellular location is the chloroplast. Its function is as follows. Usually encoded in the trnK tRNA gene intron. Probably assists in splicing its own and other chloroplast group II introns. The protein is Maturase K of Cercocarpus betuloides (Mountain mahogany).